We begin with the raw amino-acid sequence, 97 residues long: Small ribosomal subunit protein bS18c (97 aa).

The protein belongs to the bacterial ribosomal protein bS18 family. Part of the 30S ribosomal subunit.

Its subcellular location is the plastid. The protein resides in the chloroplast. This Oenothera glazioviana (Large-flowered evening primrose) protein is Small ribosomal subunit protein bS18c.